A 241-amino-acid polypeptide reads, in one-letter code: Triosephosphate isomerase (241 aa).

Asn9 to Lys11 contacts substrate. The active-site Electrophile is the His96. The active-site Proton acceptor is the Glu165. Residues Gly171, Ser204, and Gly225–Gly226 contribute to the substrate site.

This sequence belongs to the triosephosphate isomerase family. Homodimer.

It localises to the cytoplasm. The catalysed reaction is D-glyceraldehyde 3-phosphate = dihydroxyacetone phosphate. It participates in carbohydrate biosynthesis; gluconeogenesis. The protein operates within carbohydrate degradation; glycolysis; D-glyceraldehyde 3-phosphate from glycerone phosphate: step 1/1. In terms of biological role, involved in the gluconeogenesis. Catalyzes stereospecifically the conversion of dihydroxyacetone phosphate (DHAP) to D-glyceraldehyde-3-phosphate (G3P). This chain is Triosephosphate isomerase, found in Trichormus variabilis (strain ATCC 29413 / PCC 7937) (Anabaena variabilis).